The primary structure comprises 92 residues: Small ribosomal subunit protein uS19 (92 aa).

The protein belongs to the universal ribosomal protein uS19 family.

Functionally, protein S19 forms a complex with S13 that binds strongly to the 16S ribosomal RNA. The sequence is that of Small ribosomal subunit protein uS19 from Rhodopseudomonas palustris (strain BisB18).